A 303-amino-acid chain; its full sequence is Taste receptor type 2 member 13 (303 aa).

Residues 1–7 (MESALPS) lie on the Extracellular side of the membrane. A helical membrane pass occupies residues 8 to 28 (IFTLVIIAEFIIGNLSNGFIV). Residues 29 to 55 (LINCIDWVSKRELSSVDKLLIILAISR) lie on the Cytoplasmic side of the membrane. The helical transmembrane segment at 56 to 76 (IGLIWEILVSWFLALHYLAIF) threads the bilayer. Topologically, residues 77-85 (VSGTGLRIM) are extracellular. The chain crosses the membrane as a helical span at residues 86–106 (IFSWIVSNHFNLWLATIFSIF). Over 107–128 (YLLKIASFSSPAFLYLKWRVNK) the chain is Cytoplasmic. Residues 129–149 (VILMILLGTLVFLFLNLIQIN) form a helical membrane-spanning segment. Over 150–184 (MHIKDWLDRYERNTTWNFSMSDFETFSVSVKFTMT) the chain is Extracellular. N-linked (GlcNAc...) asparagine glycans are attached at residues N162 and N166. Residues 185–205 (MFSLTPFTVAFISFLLLIFSL) form a helical membrane-spanning segment. The Cytoplasmic portion of the chain corresponds to 206-232 (QKHLQKMQLNYKGHRDPRTKVHTNALK). The helical transmembrane segment at 233-253 (IVISFLLFYASFFLCVLISWI) threads the bilayer. Topologically, residues 254 to 261 (SELYQNTV) are extracellular. Residues 262–282 (IYMLCETIGVFSPSSHSFLLI) form a helical membrane-spanning segment. Residues 283 to 303 (LGNAKLRQAFLLVAAKVWAKR) lie on the Cytoplasmic side of the membrane.

The protein belongs to the G-protein coupled receptor T2R family. In terms of tissue distribution, expressed in subsets of taste receptor cells of the tongue and palate epithelium and exclusively in gustducin-positive cells.

It is found in the membrane. Functionally, receptor that may play a role in the perception of bitterness and is gustducin-linked. May play a role in sensing the chemical composition of the gastrointestinal content. The activity of this receptor may stimulate alpha gustducin, mediate PLC-beta-2 activation and lead to the gating of TRPM5. The chain is Taste receptor type 2 member 13 (TAS2R13) from Homo sapiens (Human).